The chain runs to 122 residues: Large ribosomal subunit protein bL17 (122 aa).

It belongs to the bacterial ribosomal protein bL17 family. In terms of assembly, part of the 50S ribosomal subunit. Contacts protein L32.

In Staphylococcus epidermidis (strain ATCC 35984 / DSM 28319 / BCRC 17069 / CCUG 31568 / BM 3577 / RP62A), this protein is Large ribosomal subunit protein bL17.